The primary structure comprises 782 residues: Zinc finger and SCAN domain-containing protein 10 (782 aa).

The interval 1-37 (MLAEPVPDALEQEHPGAVKLEEDEVGEEDPRLAESRP) is disordered. Residues 1-71 (MLAEPVPDAL…GRLRELCNHW (71 aa)) enclose the SCAN box domain. Basic and acidic residues-rich tracts occupy residues 11-20 (EQEHPGAVKL) and 28-37 (EDPRLAESRP). A phosphoserine mark is found at Ser-160 and Ser-206. 2 disordered regions span residues 197 to 233 (LAPSSNWPMSPEPQEILQDPRESNPSQGPSWLEENSR) and 290 to 321 (SQTEKPEVAGEPLTQTVGQETSSTGWGGTPAD). 14 C2H2-type zinc fingers span residues 292-315 (TEKPEVAGEPLTQTVGQETSSTGW), 321-343 (DGSEVVKVRGASDAPEPQGEMQF), 349-371 (GVNFPEMSHLQAHQLQSHPNLQP), 377-399 (SFRCLWCGKTFGRSSILKLHMRT), 421-443 (LTKHLLTHSSEPAFRCAECNQGF), 467-489 (EGKTKVPEMAAVLCSHCGQTFKR), 495-517 (RHLRNHAKDKDHLSSEDPGSLSS), 523-545 (PYVCSDCGKAFRQSEQLMIHTRR), 551-573 (RPFSCQVCGRCFTQNSQLISHQQ), 579-601 (KPHACPQCSKRFVRRAGLARHLL), 607-629 (RPYHCAQCGKSFRQMRDLTRHVR), 635-657 (KPCRCNECGEGFTQNAHLARHQR), 669-691 (ICGHRFRNSSNLARHRRSHTGER), and 697-719 (TCGRSFRRNAHLQRHLITHTGSK). The span at 302 to 313 (LTQTVGQETSST) shows a compositional bias: polar residues. At Gln-485 the chain carries N5-methylglutamine. The segment at 491 to 522 (SSLKRHLRNHAKDKDHLSSEDPGSLSSSQESN) is disordered. Residues 500-509 (HAKDKDHLSS) are compositionally biased toward basic and acidic residues. Over residues 510–521 (EDPGSLSSSQES) the composition is skewed to low complexity.

In terms of assembly, interacts with POU5F1/OCT4 and SOX2. In terms of processing, methylated at Gln-485 by N6AMT1. Embryonic stem (ES) cell-specific. Not expressed in adult, except in testis.

It localises to the nucleus. In terms of biological role, embryonic stem (ES) cell-specific transcription factor required to maintain ES cell pluripotency. Can both activate and /or repress expression of target genes, depending on the context. Specifically binds the 5'-[GA]CGCNNGCG[CT]-3' DNA consensus sequence. Regulates expression of POU5F1/OCT4, ZSCAN4 and ALYREF/THOC4. In Mus musculus (Mouse), this protein is Zinc finger and SCAN domain-containing protein 10 (Zscan10).